Consider the following 2596-residue polypeptide: Cadherin EGF LAG seven-pass G-type receptor fmi-1 (2596 aa).

The N-terminal stretch at 1-22 (MMLDRIMFLLFFILSLVIGSFS) is a signal peptide. Over 23 to 2229 (EYLDDKYYST…IVRVAQMDNM (2207 aa)) the chain is Extracellular. 8 consecutive Cadherin domains span residues 166-270 (QQEK…SPIF), 271-375 (EKDS…APVF), 376-479 (ASDS…APTL), 480-581 (IAAQ…APTF), 582-682 (DKKE…APYF), 683-784 (NDHP…SPQF), 785-892 (TSSS…APTF), and 893-1000 (EQLS…KPAL). N-linked (GlcNAc...) asparagine glycosylation is found at Asn-381, Asn-387, Asn-562, Asn-587, Asn-765, and Asn-824. Asn-1030 and Asn-1263 each carry an N-linked (GlcNAc...) asparagine glycan. Residues 1251 to 1287 (RIDECYRGRCSNNSTCVAFENTYQCECKPGWIGRHCE) enclose the EGF-like 1 domain. Cystine bridges form between Cys-1255–Cys-1266, Cys-1260–Cys-1275, Cys-1277–Cys-1286, Cys-1497–Cys-1526, Cys-1533–Cys-1546, Cys-1540–Cys-1555, Cys-1557–Cys-1567, Cys-1709–Cys-1732, Cys-1738–Cys-1750, Cys-1744–Cys-1759, Cys-1761–Cys-1770, and Cys-1780–Cys-1785. Positions 1333–1526 (SVSFDGEGLL…HKVGQVHEGC (194 aa)) constitute a Laminin G-like 1 domain. Positions 1529-1568 (RKDFCSTSDGQCSATSKCVNRWGGRICSCPQSVHSTGECV) constitute an EGF-like 2 domain. Residues 1577–1732 (RGHSLFEEES…KKKGKTRAGC (156 aa)) enclose the Laminin G-like 2 domain. EGF-like domains lie at 1734–1771 (VPNR…DTCL) and 1776–1808 (VANV…KNCQ). An N-linked (GlcNAc...) asparagine glycan is attached at Asn-1789. The cysteines at positions 1798 and 1807 are disulfide-linked. Residues Asn-1965, Asn-1992, Asn-2152, Asn-2195, and Asn-2228 are each glycosylated (N-linked (GlcNAc...) asparagine). A GAIN-B domain is found at 2054-2219 (EYSTLISKLW…TMFVNDQSSS (166 aa)). Cys-2174 and Cys-2201 are disulfide-bonded. Residues 2174-2219 (CVRFDEKSGTWTARGAALIGLNLTHAACEYNRIGVFTMFVNDQSSS) are GPS. Residues 2230–2250 (TSPAIAGVALFLCFLSILLTL) traverse the membrane as a helical segment. Residues 2251–2261 (SRRSLKTHSVR) are Cytoplasmic-facing. A helical transmembrane segment spans residues 2262 to 2282 (IGFILFFAINILNLFFVHKTA). Residues 2283–2292 (INQAYCPVRN) are Extracellular-facing. The chain crosses the membrane as a helical span at residues 2293 to 2313 (AMLSFTSSAPFAWLFLYGLYI). Topologically, residues 2314 to 2326 (YRMLADGSSSPSL) are cytoplasmic. Residues 2327-2347 (TTSLLVGIVFPCLISFTTFFV) form a helical membrane-spanning segment. Topologically, residues 2348-2356 (TDQCSLSPH) are extracellular. The chain crosses the membrane as a helical span at residues 2357 to 2377 (LWLFWCIILPIGLFLLLSFYA). Topologically, residues 2378–2401 (AATSVLVSLHKKYDVFVAKYNVKR) are cytoplasmic. The helical transmembrane segment at 2402–2422 (AVFQHFILTIFTLGMTLTGLF) threads the bilayer. Residues 2423 to 2437 (ANQLPLPMEIMEISQ) are Extracellular-facing. The chain crosses the membrane as a helical span at residues 2438-2458 (SIIYLIAALVIFLWCVCDITT). The Cytoplasmic segment spans residues 2459 to 2596 (KASDSNPSMW…KNTTSTFNRE (138 aa)).

Belongs to the G-protein coupled receptor 2 family. LN-TM7 subfamily. Expressed in a region of neuropil around the nerve ring and the ventral cord (at protein level). Expressed in the head, tail, ventral cord, nerve ring and neurons including HSN neurons. Expressed in DA, VA, and VB and weakly in the DB cholinergic neurons. Not expressed in ventral D-type GABAergic motorneurons.

It is found in the cell membrane. It localises to the cell projection. Its subcellular location is the axon. The protein resides in the dendrite. Functionally, during ventral cord development, required for axon fasciculation and navigation, mediating both pioneer and follower axon extension, guidance and track formation. Acts in CEPsh glia and SubL neurons to guide follower axons into the nerve ring. Promotes motorneuron development by positively regulating the extension of the anterior neurite of ventral D-type GABAergic motorneurons along the anterior-posterior axis of the ventral nerve cord. Plays a role in synaptogenesis by regulating synaptic vesicle accumulation at GABAergic and cholinergic neuromuscular junctions. This Caenorhabditis elegans protein is Cadherin EGF LAG seven-pass G-type receptor fmi-1.